The chain runs to 365 residues: tRNA/tmRNA (uracil-C(5))-methyltransferase (365 aa).

The S-adenosyl-L-methionine site is built by Gln-189, Tyr-217, Asn-222, Glu-238, and Asp-298. The Nucleophile role is filled by Cys-323. Glu-357 acts as the Proton acceptor in catalysis.

It belongs to the class I-like SAM-binding methyltransferase superfamily. RNA M5U methyltransferase family. TrmA subfamily.

It catalyses the reaction uridine(54) in tRNA + S-adenosyl-L-methionine = 5-methyluridine(54) in tRNA + S-adenosyl-L-homocysteine + H(+). The catalysed reaction is uridine(341) in tmRNA + S-adenosyl-L-methionine = 5-methyluridine(341) in tmRNA + S-adenosyl-L-homocysteine + H(+). In terms of biological role, dual-specificity methyltransferase that catalyzes the formation of 5-methyluridine at position 54 (m5U54) in all tRNAs, and that of position 341 (m5U341) in tmRNA (transfer-mRNA). The polypeptide is tRNA/tmRNA (uracil-C(5))-methyltransferase (Shewanella pealeana (strain ATCC 700345 / ANG-SQ1)).